Here is a 255-residue protein sequence, read N- to C-terminus: Type III pantothenate kinase (255 aa).

An ATP-binding site is contributed by 6–13 (DIGNTNIK). Substrate is bound at residue 107 to 110 (GADR). Residue D109 is the Proton acceptor of the active site. T132 contributes to the ATP binding site. T184 provides a ligand contact to substrate.

The protein belongs to the type III pantothenate kinase family. As to quaternary structure, homodimer. The cofactor is NH4(+). It depends on K(+) as a cofactor.

The protein resides in the cytoplasm. It catalyses the reaction (R)-pantothenate + ATP = (R)-4'-phosphopantothenate + ADP + H(+). The protein operates within cofactor biosynthesis; coenzyme A biosynthesis; CoA from (R)-pantothenate: step 1/5. Functionally, catalyzes the phosphorylation of pantothenate (Pan), the first step in CoA biosynthesis. The polypeptide is Type III pantothenate kinase (Roseiflexus sp. (strain RS-1)).